The primary structure comprises 435 residues: Hexane cyclase xenF (435 aa).

The N-terminal stretch at 1–23 (MSPAANMFRTLTLTALVSAVVSA) is a signal peptide. Asparagine 81 and asparagine 156 each carry an N-linked (GlcNAc...) asparagine glycan.

This sequence belongs to the Diels-Alderase family.

The protein operates within mycotoxin biosynthesis. Functionally, hexane cyclase; part of the gene cluster that mediates the biosynthesis of xenoacremones such as xenoacremone A, a compound that shows inhibitory activity toward the PI3K/AKT signaling pathway and which has the ability to induce apoptosis of A549 lung cancer cells. Within the pathway, cooperation of the hybrid PKS-NRPS xenE and the trans-acting enoyl reductase xenG is responsible for the formation of the reduced tyrosine-nonaketide derivative. The alpha/beta hydrolase xenA then accelerates intramolecular nucleophilic attack to give a pyrrolidone derivative. Subsequently, three enzymes, xenF, xenD, and xenC, coordinately participate in the conversion to xenoacremone B. XenF catalyzes sigmatropic rearrangement to form an A-ring, which leads to an unusual intermediate with a hexane ring, which is required for the formation of the tricarbocyclic product. Epoxidation catalyzed by xenD and the formation of the paracyclophane ether catalyzed by xenC initiate a spontaneous intramolecular Diels-Alder (IMDA) reaction to yield xenoacremone B. Spontaneous hydration of xenoacremone B leads to the formation of xenoacremone A, which undergoes subsequent methylation to afford xenoacremone C. This is Hexane cyclase xenF from Xenoacremonium sinensis (Endophyte fungus).